A 2193-amino-acid chain; its full sequence is Genome polyprotein (2193 aa).

A lipid anchor (N-myristoyl glycine; by host) is attached at glycine 2. Residues 2–1503 lie on the Cytoplasmic side of the membrane; the sequence is GAQVSTQKTG…HVSRAFICLQ (1502 aa). An amphipathic alpha-helix region spans residues 567–583; sequence ELQSDVREAVEGAIGRV. Residues histidine 880 and aspartate 898 each act as for protease 2A activity in the active site. Residues cysteine 915 and cysteine 917 each coordinate Zn(2+). Residue cysteine 969 is the For protease 2A activity of the active site. 2 residues coordinate Zn(2+): cysteine 975 and histidine 977. The tract at residues 1109 to 1181 is membrane-binding; sequence NNRWLKKFTE…EQSAPSQGDQ (73 aa). An oligomerization region spans residues 1109-1247; the sequence is NNRWLKKFTE…SPGAGKSVAT (139 aa). Residues 1130–1134 are RNA-binding; sequence AIKIQ. One can recognise an SF3 helicase domain in the interval 1213–1369; that stretch reads EKKMSNYIQF…SMYSQNGKIN (157 aa). Positions 1377, 1389, and 1394 each coordinate Zn(2+). The segment at 1377–1394 adopts a C4-type; degenerate zinc-finger fold; sequence CDEECCPVNFKKCCPLVC. The segment at 1421–1428 is RNA-binding; it reads EYNHRHSV. Positions 1432–1437 are oligomerization; the sequence is LEALFQ. An intramembrane segment occupies 1504-1519; it reads ALTTFVSVAGIIYIIY. At 1520–2193 the chain is on the cytoplasmic side; that stretch reads KLFAGFQGAY…TLRRKWLDSF (674 aa). The residue at position 1529 (tyrosine 1529) is an O-(5'-phospho-RNA)-tyrosine. The 179-residue stretch at 1549–1727 folds into the Peptidase C3 domain; sequence GPAFEFAVAM…FSAALLKHYF (179 aa). Active-site for protease 3C activity residues include histidine 1588, glutamate 1619, and cysteine 1695. Residues 1958–2074 enclose the RdRp catalytic domain; that stretch reads GHLIAFDYSG…SYPWPIDASL (117 aa). Aspartate 1964 and aspartate 2060 together coordinate Mg(2+).

The protein belongs to the picornaviruses polyprotein family. As to quaternary structure, interacts with capsid protein VP1 and capsid protein VP3 to form heterotrimeric protomers. In terms of assembly, interacts with capsid protein VP0, and capsid protein VP3 to form heterotrimeric protomers. Five protomers subsequently associate to form pentamers which serve as building blocks for the capsid. Interacts with capsid protein VP2, capsid protein VP3 and capsid protein VP4 following cleavage of capsid protein VP0. Interacts with capsid protein VP1 and capsid protein VP3 in the mature capsid. As to quaternary structure, interacts with capsid protein VP0 and capsid protein VP1 to form heterotrimeric protomers. Five protomers subsequently associate to form pentamers which serve as building blocks for the capsid. Interacts with capsid protein VP4 in the mature capsid. Interacts with protein 2C; this interaction may be important for virion morphogenesis. In terms of assembly, interacts with capsid protein VP1 and capsid protein VP3. Homodimer. As to quaternary structure, homohexamer; forms a hexameric ring structure with 6-fold symmetry characteristic of AAA+ ATPases. Interacts (via N-terminus) with host RTN3 (via reticulon domain); this interaction is important for viral replication. Interacts with capsid protein VP3; this interaction may be important for virion morphogenesis. In terms of assembly, interacts with protein 3CD. Homodimer. Interacts with host GBF1. Interacts (via GOLD domain) with host ACBD3 (via GOLD domain); this interaction allows the formation of a viral protein 3A/ACBD3 heterotetramer with a 2:2 stoichiometry, which will stimulate the recruitment of host PI4KB in order to synthesize PI4P at the viral RNA replication sites. As to quaternary structure, interacts with RNA-directed RNA polymerase. In terms of assembly, interacts with protein 3AB and with RNA-directed RNA polymerase. Interacts with Viral protein genome-linked and with protein 3CD. Mg(2+) serves as cofactor. Post-translationally, specific enzymatic cleavages in vivo by the viral proteases yield processing intermediates and the mature proteins. In terms of processing, myristoylation is required for the formation of pentamers during virus assembly. Further assembly of 12 pentamers and a molecule of genomic RNA generates the provirion. During virion maturation, immature virions are rendered infectious following cleavage of VP0 into VP4 and VP2. This maturation seems to be an autocatalytic event triggered by the presence of RNA in the capsid and it is followed by a conformational change infectious virion. Post-translationally, myristoylation is required during RNA encapsidation and formation of the mature virus particle. In terms of processing, VPg is uridylylated by the polymerase into VPg-pUpU. This acts as a nucleotide-peptide primer for the genomic RNA replication.

It localises to the virion. The protein localises to the host cytoplasm. The protein resides in the host cytoplasmic vesicle membrane. It is found in the host nucleus. It catalyses the reaction a ribonucleoside 5'-triphosphate + H2O = a ribonucleoside 5'-diphosphate + phosphate + H(+). It carries out the reaction Selective cleavage of Tyr-|-Gly bond in the picornavirus polyprotein.. The catalysed reaction is RNA(n) + a ribonucleoside 5'-triphosphate = RNA(n+1) + diphosphate. The enzyme catalyses Selective cleavage of Gln-|-Gly bond in the poliovirus polyprotein. In other picornavirus reactions Glu may be substituted for Gln, and Ser or Thr for Gly.. With respect to regulation, replication or transcription is subject to high level of random mutations by the nucleotide analog ribavirin. Its function is as follows. Forms an icosahedral capsid of pseudo T=3 symmetry with capsid proteins VP2 and VP3. The capsid is 300 Angstroms in diameter, composed of 60 copies of each capsid protein and enclosing the viral positive strand RNA genome. Capsid protein VP1 mainly forms the vertices of the capsid. Capsid protein VP1 interacts with host cell receptor to provide virion attachment to target host cells. This attachment induces virion internalization. Tyrosine kinases are probably involved in the entry process. After binding to its receptor, the capsid undergoes conformational changes. Capsid protein VP1 N-terminus (that contains an amphipathic alpha-helix) and capsid protein VP4 are externalized. Together, they shape a pore in the host membrane through which viral genome is translocated to host cell cytoplasm. Forms an icosahedral capsid of pseudo T=3 symmetry with capsid proteins VP2 and VP3. The capsid is 300 Angstroms in diameter, composed of 60 copies of each capsid protein and enclosing the viral positive strand RNA genome. In terms of biological role, lies on the inner surface of the capsid shell. After binding to the host receptor, the capsid undergoes conformational changes. Capsid protein VP4 is released, Capsid protein VP1 N-terminus is externalized, and together, they shape a pore in the host membrane through which the viral genome is translocated into the host cell cytoplasm. Functionally, component of immature procapsids, which is cleaved into capsid proteins VP4 and VP2 after maturation. Allows the capsid to remain inactive before the maturation step. Its function is as follows. Cysteine protease that cleaves viral polyprotein and specific host proteins. It is responsible for the autocatalytic cleavage between the P1 and P2 regions, which is the first cleavage occurring in the polyprotein. Also cleaves the host translation initiation factor EIF4G1, in order to shut down the capped cellular mRNA translation. Inhibits the host nucleus-cytoplasm protein and RNA trafficking by cleaving host members of the nuclear pores. Counteracts stress granule formation probably by antagonizing its assembly or promoting its dissassembly. Plays an essential role in the virus replication cycle by acting as a viroporin. Creates a pore in the host endoplasmic reticulum and as a consequence releases Ca2+ in the cytoplasm of infected cell. In turn, high levels of cytoplasmic calcium may trigger membrane trafficking and transport of viral ER-associated proteins to viroplasms, sites of viral genome replication. In terms of biological role, induces and associates with structural rearrangements of intracellular membranes. Displays RNA-binding, nucleotide binding and NTPase activities. May play a role in virion morphogenesis and viral RNA encapsidation by interacting with the capsid protein VP3. Functionally, localizes the viral replication complex to the surface of membranous vesicles. Together with protein 3CD binds the Cis-Active RNA Element (CRE) which is involved in RNA synthesis initiation. Acts as a cofactor to stimulate the activity of 3D polymerase, maybe through a nucleid acid chaperone activity. Its function is as follows. Localizes the viral replication complex to the surface of membranous vesicles. It inhibits host cell endoplasmic reticulum-to-Golgi apparatus transport and causes the disassembly of the Golgi complex, possibly through GBF1 interaction. This would result in depletion of MHC, trail receptors and IFN receptors at the host cell surface. Plays an essential role in viral RNA replication by recruiting ACBD3 and PI4KB at the viral replication sites, thereby allowing the formation of the rearranged membranous structures where viral replication takes place. Acts as a primer for viral RNA replication and remains covalently bound to viral genomic RNA. VPg is uridylylated prior to priming replication into VPg-pUpU. The oriI viral genomic sequence may act as a template for this. The VPg-pUpU is then used as primer on the genomic RNA poly(A) by the RNA-dependent RNA polymerase to replicate the viral genome. During genome replication, the VPg-RNA linkage is removed by the host TDP2, thereby accelerating replication. During the late stage of the replication cycle, host TDP2 is excluded from sites of viral RNA synthesis and encapsidation, allowing for the generation of progeny virions. In terms of biological role, involved in the viral replication complex and viral polypeptide maturation. It exhibits protease activity with a specificity and catalytic efficiency that is different from protease 3C. Protein 3CD lacks polymerase activity. Protein 3CD binds to the 5'UTR of the viral genome. Functionally, replicates the viral genomic RNA on the surface of intracellular membranes. May form linear arrays of subunits that propagate along a strong head-to-tail interaction called interface-I. Covalently attaches UMP to a tyrosine of VPg, which is used to prime RNA synthesis. The positive stranded RNA genome is first replicated at virus induced membranous vesicles, creating a dsRNA genomic replication form. This dsRNA is then used as template to synthesize positive stranded RNA genomes. ss(+)RNA genomes are either translated, replicated or encapsidated. Its function is as follows. Major viral protease that mediates proteolytic processing of the polyprotein. Cleaves host EIF5B, contributing to host translation shutoff. Also cleaves host PABPC1, contributing to host translation shutoff. Cleaves host NLRP1, triggers host N-glycine-mediated degradation of the autoinhibitory NLRP1 N-terminal fragment. The polypeptide is Genome polyprotein (Echovirus 9 (strain Hill)).